Reading from the N-terminus, the 113-residue chain is Protein USP2 (113 aa).

The signal sequence occupies residues methionine 1–alanine 18. A run of 6 repeats spans residues isoleucine 32–glycine 37, isoleucine 40–glycine 45, serine 46–tyrosine 49, proline 50–alanine 53, leucine 59–arginine 65, and leucine 69–arginine 75. Residues isoleucine 32–glycine 45 form a 2 X 6 AA repeats region. The segment at serine 46–alanine 53 is 2 X 4 AA approximate tandem repeats. Residues leucine 59–arginine 75 form a 2 X 7 AA approximate repeats region.

The protein resides in the secreted. The sequence is that of Protein USP2 (USP2) from Puccinia graminis (Black stem rust fungus).